Here is a 700-residue protein sequence, read N- to C-terminus: Receptor-type tyrosine-protein phosphatase epsilon (700 aa).

Residues 1-19 (MEPLCPLLLVGFSLPLARA) form the signal peptide. The Extracellular portion of the chain corresponds to 20–46 (LRGNETTADSNETTTTSGPPDPGASQP). 2 N-linked (GlcNAc...) asparagine glycosylation sites follow: Asn-23 and Asn-30. The chain crosses the membrane as a helical span at residues 47-69 (LLAWLLLPLLLLLLVLLLAAYFF). Topologically, residues 70 to 700 (RFRKQRKAVV…DIFSDYANFK (631 aa)) are cytoplasmic. Tyrosine-protein phosphatase domains follow at residues 135–394 (FREE…LLEY) and 426–689 (LEEE…VQDF). Residues Asp-303, 335 to 341 (CSAGVGR), and Gln-379 contribute to the substrate site. Cys-335 (phosphocysteine intermediate) is an active-site residue. Cys-630 acts as the Phosphocysteine intermediate in catalysis. Tyr-696 carries the post-translational modification Phosphotyrosine.

Belongs to the protein-tyrosine phosphatase family. Receptor class 4 subfamily. Monomer. Isoform 2: Homodimer. Can form oligomers. Dimerization is increased by oxidative stress and decreased by EGFR. Isoform 2 interacts with GRB2. Post-translationally, a catalytically active cytoplasmic form (p65) is produced by proteolytic cleavage of either isoform 1, isoform 2 or isoform 3. In terms of processing, isoform 1 and isoform 2 are phosphorylated on tyrosine residues by tyrosine kinase Neu. Isoform 1 is glycosylated. Expressed in giant cell tumor (osteoclastoma rich in multinucleated osteoclastic cells).

It localises to the cell membrane. Its subcellular location is the cytoplasm. It carries out the reaction O-phospho-L-tyrosyl-[protein] + H2O = L-tyrosyl-[protein] + phosphate. Isoform 1 plays a critical role in signaling transduction pathways and phosphoprotein network topology in red blood cells. May play a role in osteoclast formation and function. Functionally, isoform 2 acts as a negative regulator of insulin receptor (IR) signaling in skeletal muscle. Regulates insulin-induced tyrosine phosphorylation of insulin receptor (IR) and insulin receptor substrate 1 (IRS-1), phosphorylation of protein kinase B and glycogen synthase kinase-3 and insulin induced stimulation of glucose uptake. Its function is as follows. Isoform 1 and isoform 2 act as a negative regulator of FceRI-mediated signal transduction leading to cytokine production and degranulation, most likely by acting at the level of SYK to affect downstream events such as phosphorylation of SLP76 and LAT and mobilization of Ca(2+). The polypeptide is Receptor-type tyrosine-protein phosphatase epsilon (PTPRE) (Homo sapiens (Human)).